A 493-amino-acid chain; its full sequence is Glutamyl-tRNA(Gln) amidotransferase subunit A (493 aa).

Residues Lys-79 and Ser-159 each act as charge relay system in the active site. The active-site Acyl-ester intermediate is Ser-183.

It belongs to the amidase family. GatA subfamily. In terms of assembly, heterotrimer of A, B and C subunits.

The catalysed reaction is L-glutamyl-tRNA(Gln) + L-glutamine + ATP + H2O = L-glutaminyl-tRNA(Gln) + L-glutamate + ADP + phosphate + H(+). In terms of biological role, allows the formation of correctly charged Gln-tRNA(Gln) through the transamidation of misacylated Glu-tRNA(Gln) in organisms which lack glutaminyl-tRNA synthetase. The reaction takes place in the presence of glutamine and ATP through an activated gamma-phospho-Glu-tRNA(Gln). This chain is Glutamyl-tRNA(Gln) amidotransferase subunit A, found in Chelativorans sp. (strain BNC1).